A 253-amino-acid polypeptide reads, in one-letter code: Sugar fermentation stimulation protein homolog (253 aa).

Belongs to the SfsA family.

This chain is Sugar fermentation stimulation protein homolog, found in Chromohalobacter salexigens (strain ATCC BAA-138 / DSM 3043 / CIP 106854 / NCIMB 13768 / 1H11).